The chain runs to 73 residues: Translation initiation factor IF-1 (73 aa).

One can recognise an S1-like domain in the interval 1–73 (MAKKEDTIVL…TKARVVYRHR (73 aa)).

The protein belongs to the IF-1 family. As to quaternary structure, component of the 30S ribosomal translation pre-initiation complex which assembles on the 30S ribosome in the order IF-2 and IF-3, IF-1 and N-formylmethionyl-tRNA(fMet); mRNA recruitment can occur at any time during PIC assembly.

The protein resides in the cytoplasm. Its function is as follows. One of the essential components for the initiation of protein synthesis. Stabilizes the binding of IF-2 and IF-3 on the 30S subunit to which N-formylmethionyl-tRNA(fMet) subsequently binds. Helps modulate mRNA selection, yielding the 30S pre-initiation complex (PIC). Upon addition of the 50S ribosomal subunit IF-1, IF-2 and IF-3 are released leaving the mature 70S translation initiation complex. This Chlamydia muridarum (strain MoPn / Nigg) protein is Translation initiation factor IF-1.